The chain runs to 151 residues: 6,7-dimethyl-8-ribityllumazine synthase (151 aa).

Residues phenylalanine 15, 49 to 51, and 73 to 75 contribute to the 5-amino-6-(D-ribitylamino)uracil site; these read AVE and AVI. A (2S)-2-hydroxy-3-oxobutyl phosphate-binding site is contributed by 78 to 79; sequence ET. Histidine 81 acts as the Proton donor in catalysis. Phenylalanine 106 is a binding site for 5-amino-6-(D-ribitylamino)uracil. Arginine 120 serves as a coordination point for (2S)-2-hydroxy-3-oxobutyl phosphate.

This sequence belongs to the DMRL synthase family. As to quaternary structure, forms an icosahedral capsid composed of 60 subunits, arranged as a dodecamer of pentamers.

The enzyme catalyses (2S)-2-hydroxy-3-oxobutyl phosphate + 5-amino-6-(D-ribitylamino)uracil = 6,7-dimethyl-8-(1-D-ribityl)lumazine + phosphate + 2 H2O + H(+). Its pathway is cofactor biosynthesis; riboflavin biosynthesis; riboflavin from 2-hydroxy-3-oxobutyl phosphate and 5-amino-6-(D-ribitylamino)uracil: step 1/2. In terms of biological role, catalyzes the formation of 6,7-dimethyl-8-ribityllumazine by condensation of 5-amino-6-(D-ribitylamino)uracil with 3,4-dihydroxy-2-butanone 4-phosphate. This is the penultimate step in the biosynthesis of riboflavin. The sequence is that of 6,7-dimethyl-8-ribityllumazine synthase from Coxiella burnetii (strain Dugway 5J108-111).